The sequence spans 432 residues: Adenylosuccinate synthetase (432 aa).

GTP contacts are provided by residues 13–19 (GDEGKGK) and 41–43 (GHT). The active-site Proton acceptor is the aspartate 14. Mg(2+) contacts are provided by aspartate 14 and glycine 41. IMP contacts are provided by residues 14–17 (DEGK), 39–42 (NAGH), threonine 130, arginine 144, glutamine 225, threonine 240, and arginine 304. The active-site Proton donor is histidine 42. Residue 300–306 (AVTGRPR) coordinates substrate. GTP is bound by residues arginine 306, 332–334 (KLD), and 415–417 (STG).

This sequence belongs to the adenylosuccinate synthetase family. In terms of assembly, homodimer. It depends on Mg(2+) as a cofactor.

It localises to the cytoplasm. It carries out the reaction IMP + L-aspartate + GTP = N(6)-(1,2-dicarboxyethyl)-AMP + GDP + phosphate + 2 H(+). It participates in purine metabolism; AMP biosynthesis via de novo pathway; AMP from IMP: step 1/2. In terms of biological role, plays an important role in the de novo pathway of purine nucleotide biosynthesis. Catalyzes the first committed step in the biosynthesis of AMP from IMP. This is Adenylosuccinate synthetase from Pasteurella multocida (strain Pm70).